A 543-amino-acid chain; its full sequence is Hydroxylamine reductase (543 aa).

Residues C5, C8, C17, and C23 each contribute to the [4Fe-4S] cluster site. Residues H236, E260, C304, C398, C426, C451, E486, and K488 each coordinate hybrid [4Fe-2O-2S] cluster. C398 is subject to Cysteine persulfide.

It belongs to the HCP family. [4Fe-4S] cluster serves as cofactor. The cofactor is hybrid [4Fe-2O-2S] cluster.

It is found in the cytoplasm. It catalyses the reaction A + NH4(+) + H2O = hydroxylamine + AH2 + H(+). Its function is as follows. Catalyzes the reduction of hydroxylamine to form NH(3) and H(2)O. This is Hydroxylamine reductase from Bacteroides thetaiotaomicron (strain ATCC 29148 / DSM 2079 / JCM 5827 / CCUG 10774 / NCTC 10582 / VPI-5482 / E50).